A 176-amino-acid polypeptide reads, in one-letter code: ADP-ribosylation factor-like protein 8d (176 aa).

GTP contacts are provided by residues 21–26, 40–43, 62–66, and 121–124; these read NSGKTS, MIPT, DLGGQ, and NKID.

This sequence belongs to the small GTPase superfamily. Arf family. In terms of assembly, interacts with tubulin.

It localises to the late endosome membrane. Its subcellular location is the lysosome membrane. It is found in the cytoplasm. The protein localises to the cytoskeleton. The protein resides in the spindle. Its function is as follows. May play a role in lysosome motility. May play a role in chromosome segregation. The sequence is that of ADP-ribosylation factor-like protein 8d from Arabidopsis thaliana (Mouse-ear cress).